Reading from the N-terminus, the 111-residue chain is ATP-dependent Clp protease adapter protein ClpS (111 aa).

Belongs to the ClpS family. As to quaternary structure, binds to the N-terminal domain of the chaperone ClpA.

Involved in the modulation of the specificity of the ClpAP-mediated ATP-dependent protein degradation. The polypeptide is ATP-dependent Clp protease adapter protein ClpS (Legionella pneumophila (strain Paris)).